The primary structure comprises 44 residues: Phycoerythrin alpha-1 chain (44 aa).

The interval alanine 1–valine 44 is disordered. At lysine 4 the chain carries 5-hydroxylysine. 2 residues coordinate 15,16-dihydrobiliverdin: cysteine 19 and arginine 21. Positions lysine 24–glutamate 26 are 15,16-dihydrobiliverdin chromophore. Position 40 (lysine 40) interacts with 15,16-dihydrobiliverdin.

Belongs to the phycoerythrin family. In terms of assembly, heterotetramer of 2 different alpha chains and 2 identical beta chains. The subunit composition could comprise of any combination of 2 out of 4 different alpha units with an invariant beta unit. Post-translationally, contains one covalently linked 15,16-dihydrobiliverdin chromophore.

It is found in the plastid. The protein resides in the chloroplast thylakoid membrane. Its function is as follows. Light-harvesting photosynthetic tetrapyrrole chromophore-protein from the phycobiliprotein complex. The chain is Phycoerythrin alpha-1 chain (cpeA1) from Rhodomonas sp. (strain CS 24) (Chroomonas sp. (strain CS24)).